The chain runs to 170 residues: Peptide methionine sulfoxide reductase MsrA (170 aa).

Residue C13 is part of the active site.

It belongs to the MsrA Met sulfoxide reductase family.

The enzyme catalyses L-methionyl-[protein] + [thioredoxin]-disulfide + H2O = L-methionyl-(S)-S-oxide-[protein] + [thioredoxin]-dithiol. It carries out the reaction [thioredoxin]-disulfide + L-methionine + H2O = L-methionine (S)-S-oxide + [thioredoxin]-dithiol. Its function is as follows. Has an important function as a repair enzyme for proteins that have been inactivated by oxidation. Catalyzes the reversible oxidation-reduction of methionine sulfoxide in proteins to methionine. The sequence is that of Peptide methionine sulfoxide reductase MsrA from Nocardia farcinica (strain IFM 10152).